The chain runs to 248 residues: Coenzyme F420:L-glutamate ligase (248 aa).

Residues 15–18, 45–46, and Lys50 each bind GTP; these read IPLI and ET. Asp115 contributes to the a divalent metal cation binding site. Asn118 contributes to the GTP binding site. A divalent metal cation is bound by residues Asp155, Ser156, and Gln213. 211-218 is a binding site for GTP; sequence MGQSDEGI.

Belongs to the CofE family. Homodimer. Mg(2+) is required as a cofactor. The cofactor is Mn(2+). Requires K(+) as cofactor.

The catalysed reaction is oxidized coenzyme F420-0 + GTP + L-glutamate = oxidized coenzyme F420-1 + GDP + phosphate + H(+). The enzyme catalyses oxidized coenzyme F420-1 + GTP + L-glutamate = oxidized coenzyme F420-2 + GDP + phosphate + H(+). The protein operates within cofactor biosynthesis; coenzyme F420 biosynthesis. Its function is as follows. Catalyzes the GTP-dependent successive addition of two or more gamma-linked L-glutamates to the L-lactyl phosphodiester of 7,8-didemethyl-8-hydroxy-5-deazariboflavin (F420-0) to form coenzyme F420-0-glutamyl-glutamate (F420-2) or polyglutamated F420 derivatives. This chain is Coenzyme F420:L-glutamate ligase, found in Methanococcus maripaludis (strain C6 / ATCC BAA-1332).